The following is an 86-amino-acid chain: Anti-adapter protein IraP (86 aa).

Residues 1–36 (MKNLIAELLVKLAEKEEESKELVAQVEALEIVVTAL) are a coiled coil.

This sequence belongs to the IraP family. As to quaternary structure, interacts with RssB.

It localises to the cytoplasm. Functionally, inhibits RpoS proteolysis by regulating RssB activity, thereby increasing the stability of the sigma stress factor RpoS especially during phosphate starvation, but also in stationary phase and during nitrogen starvation. Its effect on RpoS stability is due to its interaction with RssB, which probably blocks the interaction of RssB with RpoS, and the consequent delivery of the RssB-RpoS complex to the ClpXP protein degradation pathway. This is Anti-adapter protein IraP from Cronobacter sakazakii (strain ATCC BAA-894) (Enterobacter sakazakii).